We begin with the raw amino-acid sequence, 81 residues long: Photosystem I iron-sulfur center (81 aa).

4Fe-4S ferredoxin-type domains follow at residues 2 to 31 and 39 to 68; these read SHSVKIYDTCIGCTQCVRACPTDVLEMIPW and IASAPRTEDCVGCKRCESACPTDFLSVRVY. Residues cysteine 11, cysteine 14, cysteine 17, cysteine 21, cysteine 48, cysteine 51, cysteine 54, and cysteine 58 each contribute to the [4Fe-4S] cluster site.

As to quaternary structure, the eukaryotic PSI reaction center is composed of at least 11 subunits. [4Fe-4S] cluster is required as a cofactor.

Its subcellular location is the plastid. The protein resides in the chloroplast thylakoid membrane. The enzyme catalyses reduced [plastocyanin] + hnu + oxidized [2Fe-2S]-[ferredoxin] = oxidized [plastocyanin] + reduced [2Fe-2S]-[ferredoxin]. Its function is as follows. Apoprotein for the two 4Fe-4S centers FA and FB of photosystem I (PSI); essential for photochemical activity. FB is the terminal electron acceptor of PSI, donating electrons to ferredoxin. The C-terminus interacts with PsaA/B/D and helps assemble the protein into the PSI complex. Required for binding of PsaD and PsaE to PSI. PSI is a plastocyanin-ferredoxin oxidoreductase, converting photonic excitation into a charge separation, which transfers an electron from the donor P700 chlorophyll pair to the spectroscopically characterized acceptors A0, A1, FX, FA and FB in turn. This chain is Photosystem I iron-sulfur center, found in Phalaenopsis aphrodite subsp. formosana (Moth orchid).